The primary structure comprises 619 residues: Chaperone protein HscA homolog (619 aa).

The protein belongs to the heat shock protein 70 family.

Its function is as follows. Chaperone involved in the maturation of iron-sulfur cluster-containing proteins. Has a low intrinsic ATPase activity which is markedly stimulated by HscB. This Chromobacterium violaceum (strain ATCC 12472 / DSM 30191 / JCM 1249 / CCUG 213 / NBRC 12614 / NCIMB 9131 / NCTC 9757 / MK) protein is Chaperone protein HscA homolog.